We begin with the raw amino-acid sequence, 225 residues long: U2 small nuclear ribonucleoprotein B'' (225 aa).

An RRM 1 domain is found at 7 to 86; the sequence is HTIYINNMND…KPMRIQYAKT (80 aa). The disordered stretch occupies residues 99-145; sequence ADKEKKKEKKKAKTVEQTATTTNKKPGQGTPNSANTQGNSTPNPQVP. An N6-acetyllysine; alternate modification is found at Lys-111. Lys-111 is covalently cross-linked (Glycyl lysine isopeptide (Lys-Gly) (interchain with G-Cter in SUMO2); alternate). Low complexity predominate over residues 113-123; the sequence is VEQTATTTNKK. Residues 127–141 are compositionally biased toward polar residues; sequence GTPNSANTQGNSTPN. Phosphotyrosine is present on Tyr-151. One can recognise an RRM 2 domain in the interval 151–225; that stretch reads YILFLNNLPE…HAMKITYAKK (75 aa).

Belongs to the RRM U1 A/B'' family. In terms of assembly, identified in the spliceosome B complex. Identified in the spliceosome C complex. Present in a spliceosome complex assembled in vitro, and composed of SNRPB2, HPRP8BP and CRNKL1. Contributes to the binding of stem loop IV of U2 snRNA with SNRPP1.

The protein localises to the nucleus. Functionally, involved in pre-mRNA splicing as component of the spliceosome. Associated with sn-RNP U2, where it contributes to the binding of stem loop IV of U2 snRNA. In Homo sapiens (Human), this protein is U2 small nuclear ribonucleoprotein B'' (SNRPB2).